A 165-amino-acid chain; its full sequence is Late embryogenesis abundant protein D-113 (165 aa).

Over residues 1 to 13 (MQSMKDAAASAKA) the composition is skewed to low complexity. 2 disordered regions span residues 1–76 (MQSM…IGGT) and 92–165 (GGTG…YRSY). Over residues 14–60 (GMEKAKASMQEKVDQMKTRDPNEKEMARERKEERQEDAELRKQEARH) the composition is skewed to basic and acidic residues. The segment covering 67-76 (HVGGGGIGGT) has biased composition (gly residues). The span at 132 to 155 (TTGNQDFPNAASNNAGTRRNTRGG) shows a compositional bias: polar residues.

This sequence belongs to the LEA type 1 family.

In terms of biological role, LEA proteins are late embryonic proteins abundant in higher plant seed embryos. There are two subsets of LEA proteins (5a and 5b), the first ones are expressed when the cotyledon weight reach 80 mg and the second set are expressed above 100 mg. The function of those proteins is not known. The sequence is that of Late embryogenesis abundant protein D-113 from Gossypium hirsutum (Upland cotton).